A 997-amino-acid chain; its full sequence is Burkholderia TALE-like protein 2 (997 aa).

A Cryptic repeat -1 repeat occupies 19 to 50; the sequence is LSPLERIKIEKHYGGGATLAFISNQHDELAQV. The Cryptic repeat 0 repeat unit spans residues 51–83; sequence LSRADILKIASYDCAAQALQAVLDCGPMLGKRG. Core repeat repeat units lie at residues 84–116, 117–147, 148–180, 181–213, 214–244, 245–277, 278–310, 311–343, 344–376, 377–409, 410–442, 443–475, 476–508, 509–539, 540–572, 573–605, 606–638, 639–671, 672–704, 705–737, 738–770, 771–803, 804–836, 837–869, 870–902, 903–935, and 936–967; these read FSRA…GKRG, FSQV…GERG, FSRG…RERG, FNQA…GKRG, FSRV…RKRG, FHPT…RERG, FSQA…CERG, FSQP…RERG, FSQA…HERG, FSQA…RERG, VRQA…RERG, FNQA…DKRG, FNPT…RERG, FNQA…RERG, FSQP…HKRG, FGQP…RERG, FSQS…RESD, FRQA…RQRG, FNRA…DERG, FNLT…QQRG, FNLT…RQRG, FNLI…RQRD, and LSLI…MQAG. Positions 84 to 967 are buD domain; sequence FSRADIVRIA…KYGPVLMQAG (884 aa). 4 ANK repeats span residues 772–801, 805–834, 838–867, and 871–900; these read RQAD…RLRQ, NRAS…TLDE, NLTN…TLQQ, and NLTD…TLRQ. The Cryptic repeat +1 repeat unit spans residues 968–997; sequence RSNEEIVHVAARRGGAGRIRKMVALLLERQ.

This sequence belongs to the transcription activator-like effector (TALE) family. Bat subfamily.

Its function is as follows. Binds to DNA in a sequence-specific manner. The polypeptide is Burkholderia TALE-like protein 2 (Mycetohabitans rhizoxinica (strain DSM 19002 / CIP 109453 / HKI 454) (Paraburkholderia rhizoxinica)).